The primary structure comprises 254 residues: Lipid uptake coordinator A (254 aa).

The next 4 helical transmembrane spans lie at 5–25 (VAVLWHASFSIGAGVLYFYFV), 44–64 (LRIATGALVGLAALPVVFTLL), 85–105 (IMAHVLAGALIVGTAISEVWL), and 114–134 (LFGIYGAAAAIAVLGFFGFYL). The interval 143 to 254 (PPPKPLKPKK…SGVQVAKVDE (112 aa)) is disordered. Over residues 148 to 163 (LKPKKPKQRRLRRKKT) the composition is skewed to basic residues. Over residues 169 to 191 (AEPEAAEEAENTELAAQEDEEAV) the composition is skewed to acidic residues. Residues 192–220 (EAPPESIESPGGEPESATREAPAAETATA) are compositionally biased toward low complexity. Over residues 227–244 (LRNRRPTGKTSHRRRRTR) the composition is skewed to basic residues.

In terms of assembly, interacts with the Mce1 and Mce4 accessory subunits Rv0199/OmamA, Rv0177/Mam1C and Rv3492c/Mam4B.

It localises to the cell membrane. Required for the import of both fatty acids and cholesterol during growth in macrophages and in axenic culture. Facilitates the uptake of these lipids by stabilizing protein subunits of the Mce1 and Mce4 multi-subunit transporters, which transport fatty acids and cholesterol, respectively. Required for full virulence in vivo. This is Lipid uptake coordinator A from Mycobacterium tuberculosis (strain ATCC 25618 / H37Rv).